Reading from the N-terminus, the 288-residue chain is MTLLLKNTLYLALIISVISSFPTSLFAQNCGCAPNLCCSNFGFCGTGTPYCGVGNCQSGPCEGGTPTTPTTPTTPTTPGTGGGGSSVSDIVSQAFFDGIIGQAAASCPGKNFYTRAAFLSAVDPKFGNEGSSDDNKREIAAFFAHISHETTNLCHIEERDGDVGDAYCDQDKAAQYPCAAGKKYYGRGPLQLSWNYNYALAGQAIGFDGLGNPEKVATDVNTSFKAAMWFWMTNVHSVMNQGFGATTKAINGALECNGQNQDQANDRIQFYKKYCADFGVAPGDNLTC.

The N-terminal stretch at 1–27 is a signal peptide; it reads MTLLLKNTLYLALIISVISSFPTSLFA. Position 28 is a pyrrolidone carboxylic acid (Gln-28). The Chitin-binding type-1 domain maps to 28-63; that stretch reads QNCGCAPNLCCSNFGFCGTGTPYCGVGNCQSGPCEG. 4 disulfides stabilise this stretch: Cys-30-Cys-38, Cys-32-Cys-44, Cys-37-Cys-51, and Cys-56-Cys-61. Positions 64 to 78 are enriched in low complexity; it reads GTPTTPTTPTTPTTP. The tract at residues 64 to 84 is disordered; sequence GTPTTPTTPTTPTTPGTGGGG. The segment at 64 to 85 is hinge region (Gly/Pro/Thr-rich); sequence GTPTTPTTPTTPTTPGTGGGGS. A 4-hydroxyproline mark is found at Pro-66, Pro-69, Pro-72, and Pro-75. 4 tandem repeats follow at residues 67–69, 70–72, 73–75, and 76–78. The tract at residues 67 to 78 is 4 X 3 AA tandem repeats of T-T-P; it reads TTPTTPTTPTTP. The catalytic stretch occupies residues 86–288; the sequence is SVSDIVSQAF…GVAPGDNLTC (203 aa). 3 cysteine pairs are disulfide-bonded: Cys-107/Cys-154, Cys-168/Cys-178, and Cys-256/Cys-288. The Proton donor role is filled by Glu-149.

It belongs to the glycosyl hydrolase 19 family. Chitinase class I subfamily. In terms of processing, O-glycosylated on hydroxyprolines; contains xylose. As to expression, localized to infected area.

It is found in the secreted. Its subcellular location is the extracellular space. It carries out the reaction Random endo-hydrolysis of N-acetyl-beta-D-glucosaminide (1-&gt;4)-beta-linkages in chitin and chitodextrins.. Defense against chitin-containing fungal pathogens. This Beta vulgaris (Sugar beet) protein is Acidic endochitinase SP2 (SP2).